A 228-amino-acid polypeptide reads, in one-letter code: Methylthioribulose-1-phosphate dehydratase (228 aa).

Residue Cys-92 participates in substrate binding. Zn(2+) is bound by residues His-110 and His-112. The Proton donor/acceptor role is filled by Glu-135. Residue His-192 coordinates Zn(2+).

It belongs to the aldolase class II family. MtnB subfamily. Zn(2+) serves as cofactor.

It is found in the cytoplasm. It localises to the nucleus. The enzyme catalyses 5-(methylsulfanyl)-D-ribulose 1-phosphate = 5-methylsulfanyl-2,3-dioxopentyl phosphate + H2O. The protein operates within amino-acid biosynthesis; L-methionine biosynthesis via salvage pathway; L-methionine from S-methyl-5-thio-alpha-D-ribose 1-phosphate: step 2/6. Its function is as follows. Catalyzes the dehydration of methylthioribulose-1-phosphate (MTRu-1-P) into 2,3-diketo-5-methylthiopentyl-1-phosphate (DK-MTP-1-P). In Schizosaccharomyces pombe (strain 972 / ATCC 24843) (Fission yeast), this protein is Methylthioribulose-1-phosphate dehydratase.